The primary structure comprises 176 residues: Ferritin, liver middle subunit (176 aa).

In terms of domain architecture, Ferritin-like diiron spans 7–156 (QNYHRDCEAA…DFITNLSRMD (150 aa)). Residues glutamate 24, glutamate 59, histidine 62, glutamate 104, and glutamine 138 each coordinate Fe cation.

This sequence belongs to the ferritin family. As to quaternary structure, in liver, forms a heteromer consisting of middle and heavy subunits. The functional molecule forms a roughly spherical shell with a diameter of 12 nm and contains a central cavity into which the insoluble mineral iron core is deposited. As to expression, liver (at protein level).

It catalyses the reaction 4 Fe(2+) + O2 + 4 H(+) = 4 Fe(3+) + 2 H2O. In terms of biological role, stores iron in a soluble, non-toxic, readily available form. Important for iron homeostasis. Has ferroxidase activity. Iron is taken up in the ferrous form and deposited as ferric hydroxides after oxidation. In Trematomus bernacchii (Emerald rockcod), this protein is Ferritin, liver middle subunit.